A 283-amino-acid polypeptide reads, in one-letter code: MNTVKTVQELRAAVARARSEGKRIALTPTMGNLHSGHAALVAKAAQRADFVVATIFINPLQFGPNEDLATYPRTLAADQEKLLQAGCNLLFTPSVEEMYPHGMADQTLVSVPHLSQGLCGASRPGHFEGVATVVSKLFNMVQPDLAIFGEKDFQQLAVIRAMVRDLNMPIQIIGEPTVRAEDGLALSSRNGYLNEAQRAAAPALYQAIRQTADAISAGEQDFDALLTSKKQQLEAAGFRIDYLEIRDATSLRPTTAENRDVVILAAAFLGKTRLIDNLHLTRS.

30–37 provides a ligand contact to ATP; the sequence is MGNLHSGH. H37 functions as the Proton donor in the catalytic mechanism. (R)-pantoate is bound at residue Q61. Beta-alanine is bound at residue Q61. 149 to 152 serves as a coordination point for ATP; sequence GEKD. Q155 contributes to the (R)-pantoate binding site. Residues V178 and 186–189 contribute to the ATP site; that span reads LSSR.

The protein belongs to the pantothenate synthetase family. As to quaternary structure, homodimer.

The protein localises to the cytoplasm. The enzyme catalyses (R)-pantoate + beta-alanine + ATP = (R)-pantothenate + AMP + diphosphate + H(+). Its pathway is cofactor biosynthesis; (R)-pantothenate biosynthesis; (R)-pantothenate from (R)-pantoate and beta-alanine: step 1/1. In terms of biological role, catalyzes the condensation of pantoate with beta-alanine in an ATP-dependent reaction via a pantoyl-adenylate intermediate. The chain is Pantothenate synthetase from Pseudomonas savastanoi pv. phaseolicola (strain 1448A / Race 6) (Pseudomonas syringae pv. phaseolicola (strain 1448A / Race 6)).